We begin with the raw amino-acid sequence, 286 residues long: NAD kinase (286 aa).

The active-site Proton acceptor is aspartate 66. Residues 66–67 (DG), 137–138 (ND), arginine 148, arginine 165, aspartate 167, and 178–183 (TAYSMS) each bind NAD(+).

The protein belongs to the NAD kinase family. The cofactor is a divalent metal cation.

The protein resides in the cytoplasm. It carries out the reaction NAD(+) + ATP = ADP + NADP(+) + H(+). Involved in the regulation of the intracellular balance of NAD and NADP, and is a key enzyme in the biosynthesis of NADP. Catalyzes specifically the phosphorylation on 2'-hydroxyl of the adenosine moiety of NAD to yield NADP. The sequence is that of NAD kinase from Chlorobium chlorochromatii (strain CaD3).